Reading from the N-terminus, the 398-residue chain is Phosphoglycerate kinase (398 aa).

Substrate-binding positions include 21-23 (DFN), R36, 59-62 (HLGR), R119, and R157. Residues K208, G296, E327, and 354–357 (GGDS) contribute to the ATP site.

Belongs to the phosphoglycerate kinase family. As to quaternary structure, monomer.

The protein resides in the cytoplasm. It catalyses the reaction (2R)-3-phosphoglycerate + ATP = (2R)-3-phospho-glyceroyl phosphate + ADP. The protein operates within carbohydrate degradation; glycolysis; pyruvate from D-glyceraldehyde 3-phosphate: step 2/5. The chain is Phosphoglycerate kinase from Streptococcus pneumoniae serotype 19F (strain G54).